A 626-amino-acid chain; its full sequence is Glucoamylase (626 aa).

The first 19 residues, 1–19, serve as a signal peptide directing secretion; it reads MHLVSSLLVVGAAFQAVLG. A propeptide spanning residues 20-35 is cleaved from the precursor; the sequence is LPDPLHEKRHSDIIKR. A glycan (N-linked (GlcNAc...) asparagine) is linked at N106. W155 contributes to the substrate binding site. The N-linked (GlcNAc...) asparagine glycan is linked to N206. D211 functions as the Proton acceptor in the catalytic mechanism. E214 (proton donor) is an active-site residue. N-linked (GlcNAc...) asparagine glycosylation occurs at N217. A CBM20 domain is found at 520-626; that stretch reads CAADHEVLVT…STATLDDTWR (107 aa).

This sequence belongs to the glycosyl hydrolase 15 family.

The enzyme catalyses Hydrolysis of terminal (1-&gt;4)-linked alpha-D-glucose residues successively from non-reducing ends of the chains with release of beta-D-glucose.. In Neurospora crassa (strain ATCC 24698 / 74-OR23-1A / CBS 708.71 / DSM 1257 / FGSC 987), this protein is Glucoamylase (gla-1).